A 373-amino-acid polypeptide reads, in one-letter code: Zinc finger protein CONSTANS-LIKE 10 (373 aa).

Cys-5, Cys-8, Cys-28, His-33, Cys-48, Cys-51, Cys-71, and His-76 together coordinate Zn(2+). The B box-type 1; atypical zinc finger occupies 5–47; it reads CDFCGEQRSMVYCRSDAACLCLSCDRNVHSANALSKRHSRTLV. The segment at 48–92 adopts a B box-type 2; atypical zinc-finger fold; it reads CERCNAQPASVRCSDERVSLCQNCDWSGHDGKNSTTTSHHKRQTI. A disordered region spans residues 152–172; it reads PETSSAAQGMDHSSVPENSSM. A CCT domain is found at 316-358; the sequence is RNNAVMRYKEKKKARKFDKRVRYVSRKERADVRRRVKGRFVKS.

This sequence belongs to the CONSTANS family.

It is found in the nucleus. In Arabidopsis thaliana (Mouse-ear cress), this protein is Zinc finger protein CONSTANS-LIKE 10 (COL10).